The chain runs to 512 residues: Maturase K (512 aa).

Belongs to the intron maturase 2 family. MatK subfamily.

The protein resides in the plastid. Its subcellular location is the chloroplast. Usually encoded in the trnK tRNA gene intron. Probably assists in splicing its own and other chloroplast group II introns. This is Maturase K from Oenothera biennis (German evening primrose).